We begin with the raw amino-acid sequence, 212 residues long: Pyrrolidone-carboxylate peptidase (212 aa).

Catalysis depends on residues glutamate 80, cysteine 143, and histidine 165.

It belongs to the peptidase C15 family. Homotetramer.

The protein resides in the cytoplasm. It catalyses the reaction Release of an N-terminal pyroglutamyl group from a polypeptide, the second amino acid generally not being Pro.. Its function is as follows. Removes 5-oxoproline from various penultimate amino acid residues except L-proline. The polypeptide is Pyrrolidone-carboxylate peptidase (Vibrio vulnificus (strain YJ016)).